A 205-amino-acid polypeptide reads, in one-letter code: Thymidylate kinase (205 aa).

10–17 (GIDGAGKT) serves as a coordination point for ATP.

This sequence belongs to the thymidylate kinase family.

It carries out the reaction dTMP + ATP = dTDP + ADP. Functionally, phosphorylation of dTMP to form dTDP in both de novo and salvage pathways of dTTP synthesis. In Nitrosospira multiformis (strain ATCC 25196 / NCIMB 11849 / C 71), this protein is Thymidylate kinase.